We begin with the raw amino-acid sequence, 358 residues long: Trace amine-associated receptor 7a (358 aa).

The Extracellular portion of the chain corresponds to 1–47 (MDKLVDNFLSGQSRTMSEDLLSASSPQLCYENLNGSCIRSPYSPGPR). A glycan (N-linked (GlcNAc...) asparagine) is linked at Asn-34. 2 disulfide bridges follow: Cys-37–Cys-201 and Cys-120–Cys-205. A helical membrane pass occupies residues 48-68 (LILYAVFGFGAVLAVCGNLLV). The Cytoplasmic portion of the chain corresponds to 69–83 (MTSILHFRQLHSPAN). A helical transmembrane segment spans residues 84–104 (FLVASLACADFLVGLTVMPFS). Topologically, residues 105-121 (TVRSVEGCWYFGDTYCK) are extracellular. The helical transmembrane segment at 122 to 143 (FHSCFEGSFCYSSIFHLCFISV) threads the bilayer. At 144–166 (DRYIAVSDPLIYPTRFTASVSGK) the chain is on the cytoplasmic side. Residues 167–187 (CITFSWLLSIIYSFSLLYTGA) traverse the membrane as a helical segment. Over 188–212 (NEAGLEDLVSALTCVGGCQIAVNQS) the chain is Extracellular. Asn-210 carries N-linked (GlcNAc...) asparagine glycosylation. The helical transmembrane segment at 213–233 (WVFINFLLFLVPTLVMMTVYS) threads the bilayer. Residues 234–274 (KIFLIAKQQAQNIEKMSKQTTRASESYKDRVAKRERKAAKT) lie on the Cytoplasmic side of the membrane. A helical membrane pass occupies residues 275–295 (LGIAVAAFLLSWLPYFIDSII). Topologically, residues 296–309 (DAFLGFITPTYVYE) are extracellular. Residues 310–333 (ILVWIAYYNSAMNPLIYAFFYPWF) traverse the membrane as a helical segment. Residues 334–358 (RKAIKLIVTGKILRQNSSVTNLFPE) are Cytoplasmic-facing.

Belongs to the G-protein coupled receptor 1 family.

The protein localises to the cell membrane. Olfactory receptor specific for N,N-dimethylalkylamines trace amines. Trace amine compounds are enriched in animal body fluids and act on trace amine-associated receptors (TAARs) to elicit both intraspecific and interspecific innate behaviors. Ligand-binding causes a conformation change that triggers signaling via G(s)-class of G alpha proteins (GNAL or GNAS). The sequence is that of Trace amine-associated receptor 7a from Rattus norvegicus (Rat).